A 344-amino-acid chain; its full sequence is Heat-inducible transcription repressor HrcA (344 aa).

This sequence belongs to the HrcA family.

Functionally, negative regulator of class I heat shock genes (grpE-dnaK-dnaJ and groELS operons). Prevents heat-shock induction of these operons. The polypeptide is Heat-inducible transcription repressor HrcA (Geobacillus kaustophilus (strain HTA426)).